The chain runs to 337 residues: Eukaryotic translation initiation factor 3 subunit H (337 aa).

Positions 25–158 (VQIEGLAVLK…LKALKLSDSF (134 aa)) constitute an MPN domain. Phosphoserine; by ATPK1 is present on Ser178. Basic and acidic residues predominate over residues 267 to 278 (RRTENMARKSAG). The tract at residues 267–290 (RRTENMARKSAGEEPLPEEDPSNP) is disordered.

Belongs to the eIF-3 subunit H family. As to quaternary structure, component of the eukaryotic translation initiation factor 3 (eIF-3) complex. Interacts directly with TIF3A1, TIF3B1, TIF3C1, TIF3E1 and TIF3F1. Associates with the CSN (COP9 signalosome) complex. Binds to CSN1, CSN7 and CSN8. Interacts with ATPK1. Post-translationally, in response to auxin (NAA), phosphorylated at Ser-178 by ATPK1 and binds to polysomes via TOR signaling. This phosphorylation is repressed by Torin-1. In terms of tissue distribution, mostly expressed in roots and flowers, and, to a lower extent, in leaves, stems and siliques.

It localises to the cytoplasm. In terms of biological role, component of the eukaryotic translation initiation factor 3 (eIF-3) complex, which is involved in protein synthesis of a specialized repertoire of mRNAs and, together with other initiation factors, stimulates binding of mRNA and methionyl-tRNAi to the 40S ribosome. The eIF-3 complex specifically targets and initiates translation of a subset of mRNAs involved in cell proliferation (Potential). Regulates translation initiation of specific 5' mRNAs harboring multiple upstream open reading frames (uORFs) in their 5' leader sequence (e.g. BETA-OHASE 2 and LHY). This Arabidopsis thaliana (Mouse-ear cress) protein is Eukaryotic translation initiation factor 3 subunit H (TIF3H1).